The following is a 454-amino-acid chain: Bifunctional protein GlmU (454 aa).

The pyrophosphorylase stretch occupies residues 1–231 (MDRATVSLIV…EAETLGVNTR (231 aa)). UDP-N-acetyl-alpha-D-glucosamine is bound by residues 11 to 14 (LAAG), Lys-25, Gln-78, 83 to 84 (GT), 106 to 108 (YGD), Gly-143, Glu-157, Asn-172, and Asn-229. A Mg(2+)-binding site is contributed by Asp-108. Asn-229 is a binding site for Mg(2+). A linker region spans residues 232–252 (AQLAEAEAEFQKRARAAALED). Residues 253-454 (GVTLTAPDTV…AKAAKKKEAP (202 aa)) form an N-acetyltransferase region. Residues Arg-318 and Lys-336 each coordinate UDP-N-acetyl-alpha-D-glucosamine. His-348 functions as the Proton acceptor in the catalytic mechanism. Residues Tyr-351 and Asn-362 each coordinate UDP-N-acetyl-alpha-D-glucosamine. Acetyl-CoA-binding positions include Ala-365, 371–372 (NY), Ser-390, Ser-408, and Arg-425.

This sequence in the N-terminal section; belongs to the N-acetylglucosamine-1-phosphate uridyltransferase family. It in the C-terminal section; belongs to the transferase hexapeptide repeat family. As to quaternary structure, homotrimer. It depends on Mg(2+) as a cofactor.

The protein localises to the cytoplasm. It catalyses the reaction alpha-D-glucosamine 1-phosphate + acetyl-CoA = N-acetyl-alpha-D-glucosamine 1-phosphate + CoA + H(+). It carries out the reaction N-acetyl-alpha-D-glucosamine 1-phosphate + UTP + H(+) = UDP-N-acetyl-alpha-D-glucosamine + diphosphate. Its pathway is nucleotide-sugar biosynthesis; UDP-N-acetyl-alpha-D-glucosamine biosynthesis; N-acetyl-alpha-D-glucosamine 1-phosphate from alpha-D-glucosamine 6-phosphate (route II): step 2/2. The protein operates within nucleotide-sugar biosynthesis; UDP-N-acetyl-alpha-D-glucosamine biosynthesis; UDP-N-acetyl-alpha-D-glucosamine from N-acetyl-alpha-D-glucosamine 1-phosphate: step 1/1. It participates in bacterial outer membrane biogenesis; LPS lipid A biosynthesis. In terms of biological role, catalyzes the last two sequential reactions in the de novo biosynthetic pathway for UDP-N-acetylglucosamine (UDP-GlcNAc). The C-terminal domain catalyzes the transfer of acetyl group from acetyl coenzyme A to glucosamine-1-phosphate (GlcN-1-P) to produce N-acetylglucosamine-1-phosphate (GlcNAc-1-P), which is converted into UDP-GlcNAc by the transfer of uridine 5-monophosphate (from uridine 5-triphosphate), a reaction catalyzed by the N-terminal domain. This Cereibacter sphaeroides (strain ATCC 17023 / DSM 158 / JCM 6121 / CCUG 31486 / LMG 2827 / NBRC 12203 / NCIMB 8253 / ATH 2.4.1.) (Rhodobacter sphaeroides) protein is Bifunctional protein GlmU.